The following is a 421-amino-acid chain: Galactooligosaccharide-binding protein (421 aa).

An N-terminal signal peptide occupies residues 1 to 22 (MKMAKKCSVFMLCAAVSLSLAA). The N-palmitoyl cysteine moiety is linked to residue C23. C23 carries S-diacylglycerol cysteine lipidation. Residues 393–421 (ATGKADPKQALDQAAETAKGQIKAKHSGK) are disordered.

The protein belongs to the bacterial solute-binding protein 1 family. The complex is composed of two ATP-binding proteins (MsmX), two transmembrane proteins (GanP and GanQ) and a solute-binding protein (GanS).

The protein localises to the cell membrane. Functionally, involved in galactan degradation. Part of the ABC transporter complex GanPQS involved in the uptake of galactooligosaccharides. Binds mainly galactotetraose and galactotriose. This chain is Galactooligosaccharide-binding protein, found in Bacillus subtilis (strain 168).